We begin with the raw amino-acid sequence, 252 residues long: MKILVSNDDGVLAPGIKILANELSTLGEVKVVAPDRNRSGASNSLTLTQPLRVKQLDNGYYSVDGTPTDCVHLALTGFLEPIADIVVSGINEGANLGDDVLYSGTVAAAMEGRYLGLPAIAISMVGDNIQYYETAAIIAKQLVIKLSANKLPSQTILNVNVPDLPLSQIRGLQVTRLGTRHSAEPIIKEYDPRGRPIYWVGPPGIEADAGAGTDFFAIKTGHVSITPLHLDMTHYKLFDHLSNLLNEICIEN.

Aspartate 8, aspartate 9, serine 39, and asparagine 91 together coordinate a divalent metal cation.

This sequence belongs to the SurE nucleotidase family. The cofactor is a divalent metal cation.

It localises to the cytoplasm. It catalyses the reaction a ribonucleoside 5'-phosphate + H2O = a ribonucleoside + phosphate. Its function is as follows. Nucleotidase that shows phosphatase activity on nucleoside 5'-monophosphates. This chain is 5'-nucleotidase SurE, found in Legionella pneumophila (strain Paris).